The sequence spans 114 residues: Flagellar hook-basal body complex protein FliE (114 aa).

The protein belongs to the FliE family.

It localises to the bacterial flagellum basal body. The protein is Flagellar hook-basal body complex protein FliE of Burkholderia cenocepacia (strain ATCC BAA-245 / DSM 16553 / LMG 16656 / NCTC 13227 / J2315 / CF5610) (Burkholderia cepacia (strain J2315)).